Reading from the N-terminus, the 469-residue chain is ATP-dependent protease ATPase subunit HslU (469 aa).

Residues Ile-24, 66 to 71 (GVGKTE), Asp-282, Glu-347, and Arg-419 each bind ATP.

It belongs to the ClpX chaperone family. HslU subfamily. In terms of assembly, a double ring-shaped homohexamer of HslV is capped on each side by a ring-shaped HslU homohexamer. The assembly of the HslU/HslV complex is dependent on binding of ATP.

The protein resides in the cytoplasm. In terms of biological role, ATPase subunit of a proteasome-like degradation complex; this subunit has chaperone activity. The binding of ATP and its subsequent hydrolysis by HslU are essential for unfolding of protein substrates subsequently hydrolyzed by HslV. HslU recognizes the N-terminal part of its protein substrates and unfolds these before they are guided to HslV for hydrolysis. The chain is ATP-dependent protease ATPase subunit HslU from Listeria monocytogenes serotype 4b (strain CLIP80459).